Consider the following 631-residue polypeptide: 1-deoxy-D-xylulose-5-phosphate synthase (631 aa).

Thiamine diphosphate-binding positions include H73, 113–115, N174, Y285, and E367; that span reads SHA. N174 is a binding site for Mg(2+).

It belongs to the transketolase family. DXPS subfamily. Homodimer. It depends on Mg(2+) as a cofactor. Thiamine diphosphate is required as a cofactor.

It catalyses the reaction D-glyceraldehyde 3-phosphate + pyruvate + H(+) = 1-deoxy-D-xylulose 5-phosphate + CO2. It functions in the pathway metabolic intermediate biosynthesis; 1-deoxy-D-xylulose 5-phosphate biosynthesis; 1-deoxy-D-xylulose 5-phosphate from D-glyceraldehyde 3-phosphate and pyruvate: step 1/1. Its function is as follows. Catalyzes the acyloin condensation reaction between C atoms 2 and 3 of pyruvate and glyceraldehyde 3-phosphate to yield 1-deoxy-D-xylulose-5-phosphate (DXP). The chain is 1-deoxy-D-xylulose-5-phosphate synthase from Streptomyces sp. (strain CL190).